Consider the following 56-residue polypeptide: MKTASFILSFVVLLIVIITWIGEVSAVSEPEPVAKATAHAAAVHVPPICSHRECRK.

The N-terminal stretch at 1–26 (MKTASFILSFVVLLIVIITWIGEVSA) is a signal peptide. Residues 27-42 (VSEPEPVAKATAHAAA) constitute a propeptide that is removed on maturation. A disulfide bridge connects residues cysteine 49 and cysteine 54.

Probably contains 1 disulfide bond, which may be crucial for activity, since the linear peptide without disulfide bond is inactive. In terms of tissue distribution, expressed by the venom gland.

Its subcellular location is the secreted. This is Venom peptide 5 from Eumenes pomiformis (Potter wasp).